We begin with the raw amino-acid sequence, 163 residues long: Small ribosomal subunit protein bS18c (163 aa).

Disordered stretches follow at residues 1 to 52 (MYIS…IGPG) and 144 to 163 (NLRN…SSDC). Basic residues predominate over residues 7-48 (PFRKSKQPFRKSKQTFHKSKQPFRKFKQPFRKSKQPFRRRSR).

It belongs to the bacterial ribosomal protein bS18 family. Part of the 30S ribosomal subunit.

The protein resides in the plastid. It localises to the chloroplast. The polypeptide is Small ribosomal subunit protein bS18c (Sorghum bicolor (Sorghum)).